We begin with the raw amino-acid sequence, 258 residues long: MMNLRVLFLALLLLASPLLQVARCQSDAEDHSSLVDDVVGENTDDAVEEDDHDLDMNLSSFPGVETVCVFPKNSAKLVPAGEETELLVGLKNEGKTRVGVMGIRASVHLPYDHKLLVQNLTMLRLNNASIPTSLQATFPYIFAVSQYLQPGAFDLVGYIIYDVEGKPYQSVFYNGTIEVVESGGLLSGESVFLLTLGIGLLLLLGLWAYSQVQRLTKKTKKVSKVEVGTRSTEASLDEWLEGTTLAKTSSGKTKNKKN.

The N-terminal stretch at 1-24 (MMNLRVLFLALLLLASPLLQVARC) is a signal peptide. Topologically, residues 25–190 (QSDAEDHSSL…ESGGLLSGES (166 aa)) are lumenal. Residues Asn57, Asn119, and Asn127 are each glycosylated (N-linked (GlcNAc...) asparagine). The helical transmembrane segment at 191–209 (VFLLTLGIGLLLLLGLWAY) threads the bilayer. Residues 210 to 258 (SQVQRLTKKTKKVSKVEVGTRSTEASLDEWLEGTTLAKTSSGKTKNKKN) lie on the Cytoplasmic side of the membrane.

Belongs to the TRAP-alpha family. As to quaternary structure, heterotetramer of TRAP-alpha, TRAP-beta, TRAP-delta and TRAP-gamma. Post-translationally, phosphorylated in its cytoplasmic tail.

Its subcellular location is the endoplasmic reticulum membrane. TRAP proteins are part of a complex whose function is to bind calcium to the ER membrane and thereby regulate the retention of ER resident proteins. May be involved in the recycling of the translocation apparatus after completion of the translocation process or may function as a membrane-bound chaperone facilitating folding of translocated proteins. The protein is Translocon-associated protein subunit alpha of Arabidopsis thaliana (Mouse-ear cress).